The primary structure comprises 444 residues: Gustatory receptor 5a for trehalose (444 aa).

Topologically, residues 1 to 56 (MRQLKGRNRCNRAVRHLKIQGKMWLKNLKSGLEQIRESQVRGTRKNFLHDGSFHEA) are cytoplasmic. The chain crosses the membrane as a helical span at residues 57–77 (VAPVLAVAQCFCLMPVCGISA). At 78–178 (PTYRGLSFNR…RARPARRLKL (101 aa)) the chain is on the extracellular side. Residues 179–199 (VAFVLLVVSLMEHLLSIISVV) form a helical membrane-spanning segment. Over 200 to 214 (YYDFCPRRSDPVESY) the chain is Cytoplasmic. A helical transmembrane segment spans residues 215 to 235 (LLGASAQLFEVFPYSNWLAWL). Residues 236–240 (GKIQN) lie on the Extracellular side of the membrane. Residues 241-261 (VLLTFGWSYMDIFLMMLGMGL) traverse the membrane as a helical segment. Over 262–305 (SEMLARLNRSLEQQVRQPMPEAYWTWSRTLYRSIVELIREVDDA) the chain is Cytoplasmic. A helical transmembrane segment spans residues 306–326 (VSGIMLISFGSNLYFICLQLL). Residues 327 to 338 (KSINTMPSSAHA) lie on the Extracellular side of the membrane. Residues 339–359 (VYFYFSLLFLLSRSTAVLLFV) traverse the membrane as a helical segment. Residues 360 to 410 (SAINDQAREPLRLLRLVPLKGYHPEVFRFAAELASDQVALTGLKFFNVTRK) are Cytoplasmic-facing. The chain crosses the membrane as a helical span at residues 411 to 431 (LFLAMAGTVATYELVLIQFHE). At 432-444 (DKKTWDCSPFNLD) the chain is on the extracellular side.

The protein belongs to the insect chemoreceptor superfamily. Gustatory receptor (GR) family. Gr5a subfamily. In terms of tissue distribution, expressed in labellar chemosensory neurons.

It localises to the cell membrane. Its function is as follows. Gustatory receptor required for response to the sugar trehalose in taste neurons. Gr5a neurons selectively respond to sugars, in contrast to Gr66a cells which respond to bitter compounds. Flies are attracted to sugars and avoid bitter substances, suggesting that Gr5a neuron activity is sufficient to mediate acceptance behavior. Sugar signal transduction occurs through coupling with G-proteins such as Galpha49B and G-salpha60A. This chain is Gustatory receptor 5a for trehalose (Gr5a), found in Drosophila melanogaster (Fruit fly).